The primary structure comprises 545 residues: Chaperonin GroEL (545 aa).

Residues 29–32 (TLGP), 86–90 (DGTTT), G413, 476–478 (NAA), and D492 each bind ATP.

The protein belongs to the chaperonin (HSP60) family. As to quaternary structure, forms a cylinder of 14 subunits composed of two heptameric rings stacked back-to-back. Interacts with the co-chaperonin GroES.

The protein resides in the cytoplasm. The enzyme catalyses ATP + H2O + a folded polypeptide = ADP + phosphate + an unfolded polypeptide.. In terms of biological role, together with its co-chaperonin GroES, plays an essential role in assisting protein folding. The GroEL-GroES system forms a nano-cage that allows encapsulation of the non-native substrate proteins and provides a physical environment optimized to promote and accelerate protein folding. In Oceanobacillus iheyensis (strain DSM 14371 / CIP 107618 / JCM 11309 / KCTC 3954 / HTE831), this protein is Chaperonin GroEL.